A 235-amino-acid polypeptide reads, in one-letter code: Octanoyltransferase (235 aa).

Residues 59 to 235 (PGSSQAVWLL…KKSLTERFGL (177 aa)) form the BPL/LPL catalytic domain. Residues 101-108 (RGGEVTHH), 168-170 (SIG), and 181-183 (GLS) contribute to the substrate site. Catalysis depends on Cys-199, which acts as the Acyl-thioester intermediate.

It belongs to the LipB family.

The protein resides in the cytoplasm. It catalyses the reaction octanoyl-[ACP] + L-lysyl-[protein] = N(6)-octanoyl-L-lysyl-[protein] + holo-[ACP] + H(+). It functions in the pathway protein modification; protein lipoylation via endogenous pathway; protein N(6)-(lipoyl)lysine from octanoyl-[acyl-carrier-protein]: step 1/2. Its function is as follows. Catalyzes the transfer of endogenously produced octanoic acid from octanoyl-acyl-carrier-protein onto the lipoyl domains of lipoate-dependent enzymes. Lipoyl-ACP can also act as a substrate although octanoyl-ACP is likely to be the physiological substrate. The polypeptide is Octanoyltransferase (Prochlorococcus marinus (strain MIT 9211)).